We begin with the raw amino-acid sequence, 122 residues long: Proteasome assembly chaperone 3 (122 aa).

Residue Met-1 is modified to N-acetylmethionine.

It belongs to the PSMG3 family. In terms of assembly, homodimer. Interacts directly with alpha and beta subunits of the 20S proteasome but dissociates before the formation of half-proteasomes, probably upon recruitment of POMP. Interacts with PSMG4.

Functionally, chaperone protein which promotes assembly of the 20S proteasome. May cooperate with PSMG1-PSMG2 heterodimers to orchestrate the correct assembly of proteasomes. This Mus musculus (Mouse) protein is Proteasome assembly chaperone 3 (Psmg3).